The following is a 303-amino-acid chain: Cyclin-dependent kinase 4 (303 aa).

At alanine 2 the chain carries N-acetylalanine. Positions 6–295 (YEPVAEIGVG…AFRALQHSYL (290 aa)) constitute a Protein kinase domain. ATP contacts are provided by residues 12 to 20 (IGVGAYGTV) and lysine 35. Positions 50–56 (PVSTVRE) are required for binding D-type cyclins. Catalysis depends on aspartate 140, which acts as the Proton acceptor. At threonine 172 the chain carries Phosphothreonine; by CAK. Serine 300 is modified (phosphoserine).

The protein belongs to the protein kinase superfamily. CMGC Ser/Thr protein kinase family. CDC2/CDKX subfamily. As to quaternary structure, component of the D-CDK4 complex, composed of CDK4 and some D-type G1 cyclin (CCND1, CCND2 or CCND3). Interacts directly in the complex with CCND1, CCND2 or CCND3. Interacts with SEI1 and ZNF655. Forms a ternary complex, cyclin D-CDK4-CDKN1B, involved in modulating CDK4 enzymatic activity. Interacts directly with CDKN1B (phosphorylated on 'Tyr-88' and 'Tyr-89'); the interaction allows assembly of the cyclin D-CDK4 complex, Thr-172 phosphorylation, nuclear translocation and enhances the cyclin D-CDK4 complex activity. CDK4 activity is either inhibited or enhanced depending on stoichiometry of complex. The non-tyrosine-phosphorylated form of CDKN1B prevents T-loop phosphorylation of CDK4 producing inactive CDK4. Interacts (unphosphorylated form) with CDK2. Also forms ternary complexes with CDKN1A or CDKN2A. Interacts directly with CDKN1A (via its N-terminal); the interaction promotes the assembly of the cyclin D-CDK4 complex, its nuclear translocation and promotes the cyclin D-dependent enzyme activity of CDK4. Interacts with CCND1; the interaction is prevented with the binding of CCND1 to INSM1 during cell cycle progression. Probably forms a complex composed of chaperones HSP90 and HSP70, co-chaperones CDC37, PPP5C, TSC1 and client protein TSC2, CDK4, AKT, RAF1 and NR3C1; this complex does not contain co-chaperones STIP1/HOP and PTGES3/p23. Interacts with CEBPA (when phosphorylated). Interacts with FNIP1 and FNIP2. As to expression, expressed in fetal and adult lung. Also expressed in brain, heart, liver, skeletal muscle and testes.

The protein resides in the cytoplasm. It localises to the nucleus. It is found in the nucleus membrane. The enzyme catalyses L-seryl-[protein] + ATP = O-phospho-L-seryl-[protein] + ADP + H(+). The catalysed reaction is L-threonyl-[protein] + ATP = O-phospho-L-threonyl-[protein] + ADP + H(+). With respect to regulation, both phosphorylation at Thr-172 and binding of a D-type cyclin are necessary for enzymatic activity. Full activation of the cyclin-D-CDK4 complex appears to require other factors such as recruitment of the substrate via a substrate recruitment motif, and/or formation of the CDKN1B ternary complex. Inhibited by INK4 family members. In resting cells, the non-tyrosine-phosphorylated form of CDKN1B prevents phosphorylation at Thr-172 and inactivation, while, in proliferating cells, tyrosine phosphorylation of CDKN1B allows phosphorylation of Thr-172 of CDK4 and subsequent activation. Functionally, ser/Thr-kinase component of cyclin D-CDK4 (DC) complexes that phosphorylate and inhibit members of the retinoblastoma (RB) protein family including RB1 and regulate the cell-cycle during G(1)/S transition. Phosphorylation of RB1 allows dissociation of the transcription factor E2F from the RB/E2F complexes and the subsequent transcription of E2F target genes which are responsible for the progression through the G(1) phase. Hypophosphorylates RB1 in early G(1) phase. Cyclin D-CDK4 complexes are major integrators of various mitogenenic and antimitogenic signals. Also phosphorylates SMAD3 in a cell-cycle-dependent manner and represses its transcriptional activity. Component of the ternary complex, cyclin D/CDK4/CDKN1B, required for nuclear translocation and activity of the cyclin D-CDK4 complex. The chain is Cyclin-dependent kinase 4 (Cdk4) from Rattus norvegicus (Rat).